The sequence spans 256 residues: Nuclear shuttle protein (256 aa).

The Bipartite nuclear localization signal signature appears at 18-39; it reads NTTNRFPIRRKYVGGHTRPSVR. The Nuclear localization signal signature appears at 81–96; the sequence is SRGPSGDGRSRDYIKL. Positions 150–187 are interaction with Arabidopsis thaliana NSI protein; it reads ELFGAYSACYVNLRLLNNQQHRYRVLHSVKRFVSSAGD.

Belongs to the begomovirus nuclear shuttle protein family. Binds to single-stranded and double-stranded viral DNA. Interacts with the host nuclear shuttle interacting (NSI) protein. This interaction may allow NSP to recruit NSI monomers to the viral genome and thus regulate nuclear export of viral genome by NSP.

It localises to the host nucleus. Its subcellular location is the host cytoplasm. The protein localises to the host cell membrane. In terms of biological role, binds to the genomic viral ssDNA, shuttles it into and out of the cell nucleus. Begomoviruses use 2 proteins to transport their DNA from cell to cell. The nuclear shuttle protein (NSP) shuttles it between nucleus and cytoplasm and the movement protein (MP) probably transports the DNA-NSP complex to the cell periphery and facilitates movement across the cell wall. This is Nuclear shuttle protein from Hewittia sublobata (Coralbush).